Reading from the N-terminus, the 150-residue chain is Putative pre-16S rRNA nuclease (150 aa).

The protein belongs to the YqgF nuclease family.

It is found in the cytoplasm. Its function is as follows. Could be a nuclease involved in processing of the 5'-end of pre-16S rRNA. This Protochlamydia amoebophila (strain UWE25) protein is Putative pre-16S rRNA nuclease.